We begin with the raw amino-acid sequence, 30 residues long: GIPCAESCVYIPCITAALGCSCKNKVCYRN.

A cross-link (cyclopeptide (Gly-Asn)) is located at residues 1–30 (GIPCAESCVYIPCITAALGCSCKNKVCYRN). Cystine bridges form between cysteine 4-cysteine 20, cysteine 8-cysteine 22, and cysteine 13-cysteine 27.

The protein belongs to the cyclotide family. Bracelet subfamily. In terms of processing, this is a cyclic peptide.

Its function is as follows. Probably participates in a plant defense mechanism. The polypeptide is Cyclotide mden-G (Melicytus dentatus (Tree violet)).